The chain runs to 472 residues: UDP-N-acetylmuramate--L-alanine ligase (472 aa).

An ATP-binding site is contributed by 119–125 (GTHGKTT).

Belongs to the MurCDEF family.

It is found in the cytoplasm. The catalysed reaction is UDP-N-acetyl-alpha-D-muramate + L-alanine + ATP = UDP-N-acetyl-alpha-D-muramoyl-L-alanine + ADP + phosphate + H(+). It functions in the pathway cell wall biogenesis; peptidoglycan biosynthesis. Functionally, cell wall formation. The polypeptide is UDP-N-acetylmuramate--L-alanine ligase (Caulobacter sp. (strain K31)).